A 627-amino-acid polypeptide reads, in one-letter code: Threonine--tRNA ligase (627 aa).

The interval 221 to 523 (DHRKLGRELG…LIEHFAGDFP (303 aa)) is catalytic. Zn(2+)-binding residues include Cys319, His370, and His500.

This sequence belongs to the class-II aminoacyl-tRNA synthetase family. As to quaternary structure, homodimer. Requires Zn(2+) as cofactor.

The protein resides in the cytoplasm. The enzyme catalyses tRNA(Thr) + L-threonine + ATP = L-threonyl-tRNA(Thr) + AMP + diphosphate + H(+). Its function is as follows. Catalyzes the attachment of threonine to tRNA(Thr) in a two-step reaction: L-threonine is first activated by ATP to form Thr-AMP and then transferred to the acceptor end of tRNA(Thr). Also edits incorrectly charged L-seryl-tRNA(Thr). The polypeptide is Threonine--tRNA ligase (Gloeobacter violaceus (strain ATCC 29082 / PCC 7421)).